The following is a 404-amino-acid chain: Tripartite motif-containing 13 (404 aa).

Residues 10–56 (CPICCCLFEDPRVLPCSHSFCKKCLEGILDGNRSPTWRPPFKCPTCR) form an RING-type zinc finger. Residues 87-129 (PRMSQCRVHSGQPLNIFCATDLKLICGFCATTGDHKGHKFCAL) form a B box-type zinc finger. Zn(2+)-binding residues include C92, H95, C115, and H121. Residues 102-119 (IFCATDLKLICGFCATTG) traverse the membrane as a helical segment. Residues 186 to 236 (KLLRTLEHKRSEILSDLETLKLAVMQTFDPEINRLRSALEEQRRALNIAES) adopt a coiled-coil conformation.

It localises to the endoplasmic reticulum membrane. It participates in protein modification; protein ubiquitination. In terms of biological role, E3 ubiquitin ligase involved in the retrotranslocation and turnover of membrane and secretory proteins from the ER through a set of processes named ER-associated degradation (ERAD). This process acts on misfolded proteins as well as in the regulated degradation of correctly folded proteins. The chain is Tripartite motif-containing 13 (trim13) from Danio rerio (Zebrafish).